A 410-amino-acid polypeptide reads, in one-letter code: Pectate lyase PEL9 (410 aa).

The signal sequence occupies residues 1 to 18; that stretch reads MMGKSVWVFAALFPAVLA. Ca(2+) is bound by residues Asp-191, Asp-215, Asp-216, and Asp-219. A glycan (N-linked (GlcNAc...) asparagine) is linked at Asn-234. Lys-271 (proton acceptor) is an active-site residue. The segment covering 342–351 has biased composition (polar residues); the sequence is GEAPTSLSDE. 2 disordered regions span residues 342–361 and 381–410; these read GEAPTSLSDEQISDGNSWDG and ERNADGTIEPSGFLLPADGEEIGATTDWSA.

It belongs to the polysaccharide lyase 9 family. Requires Ca(2+) as cofactor.

The protein localises to the secreted. The enzyme catalyses Eliminative cleavage of (1-&gt;4)-alpha-D-galacturonan to give oligosaccharides with 4-deoxy-alpha-D-galact-4-enuronosyl groups at their non-reducing ends.. Its activity is regulated as follows. Inhibited by iron ions. Activated in presence of the surfactant polysorbate 20, while inhibited in the presence of Triton X-100 and sodium dodecyl sulfate. Inhibited in presence of the organic solvents methanol, ethanol, propan-2-ol and acetone. In terms of biological role, presents an endo-cleaving activity on the homogalacturonan (HG) region in pectin. Active on homogalacturonan with a degree of polymerization above 4, and does not appear to be affected by the degree of methylation of the substrate. Does not degrade linear rhamnogalacturonan. The polypeptide is Pectate lyase PEL9 (Emericella nidulans (strain FGSC A4 / ATCC 38163 / CBS 112.46 / NRRL 194 / M139) (Aspergillus nidulans)).